Here is a 1254-residue protein sequence, read N- to C-terminus: DNA-directed RNA polymerase subunit beta' (1254 aa).

4 residues coordinate Zn(2+): Cys-59, Cys-61, Cys-76, and Cys-79. 3 residues coordinate Mg(2+): Asp-501, Asp-503, and Asp-505. Zn(2+) contacts are provided by Cys-871, Cys-946, Cys-953, and Cys-956.

Belongs to the RNA polymerase beta' chain family. The RNAP catalytic core consists of 2 alpha, 1 beta, 1 beta' and 1 omega subunit. When a sigma factor is associated with the core the holoenzyme is formed, which can initiate transcription. Requires Mg(2+) as cofactor. Zn(2+) is required as a cofactor.

It carries out the reaction RNA(n) + a ribonucleoside 5'-triphosphate = RNA(n+1) + diphosphate. Its function is as follows. DNA-dependent RNA polymerase catalyzes the transcription of DNA into RNA using the four ribonucleoside triphosphates as substrates. This Mesoplasma florum (strain ATCC 33453 / NBRC 100688 / NCTC 11704 / L1) (Acholeplasma florum) protein is DNA-directed RNA polymerase subunit beta'.